We begin with the raw amino-acid sequence, 299 residues long: Acetylglutamate kinase (299 aa).

Substrate is bound by residues 72-73 (GG), arginine 94, and asparagine 196.

This sequence belongs to the acetylglutamate kinase family. ArgB subfamily.

The protein localises to the cytoplasm. It carries out the reaction N-acetyl-L-glutamate + ATP = N-acetyl-L-glutamyl 5-phosphate + ADP. Its pathway is amino-acid biosynthesis; L-arginine biosynthesis; N(2)-acetyl-L-ornithine from L-glutamate: step 2/4. Catalyzes the ATP-dependent phosphorylation of N-acetyl-L-glutamate. The protein is Acetylglutamate kinase of Burkholderia cenocepacia (strain ATCC BAA-245 / DSM 16553 / LMG 16656 / NCTC 13227 / J2315 / CF5610) (Burkholderia cepacia (strain J2315)).